The chain runs to 81 residues: Sulfur carrier protein TusA (81 aa).

Cysteine 19 functions as the Cysteine persulfide intermediate in the catalytic mechanism.

It belongs to the sulfur carrier protein TusA family. Interacts with IscS.

Its subcellular location is the cytoplasm. Its pathway is tRNA modification. Its function is as follows. Sulfur carrier protein involved in sulfur trafficking in the cell. Part of a sulfur-relay system required for 2-thiolation during synthesis of 2-thiouridine of the modified wobble base 5-methylaminomethyl-2-thiouridine (mnm(5)s(2)U) in tRNA. Interacts with IscS and stimulates its cysteine desulfurase activity. Accepts an activated sulfur from IscS, which is then transferred to TusD, and thus determines the direction of sulfur flow from IscS to 2-thiouridine formation. Also appears to be involved in sulfur transfer for the biosynthesis of molybdopterin. This is Sulfur carrier protein TusA from Citrobacter koseri (strain ATCC BAA-895 / CDC 4225-83 / SGSC4696).